A 2628-amino-acid chain; its full sequence is Protein FMP27, mitochondrial (2628 aa).

The signal sequence occupies residues 1 to 28 (MMFPINVLLYKWLIFAVTFLWSCKILLR). A transmembrane domain region spans residues 29-192 (KLLGINITWI…NTNLLIGEIM (164 aa)). 9 LRR repeats span residues 160 to 182 (FDSFLRKLLWNGQTIIADAIFIV), 213 to 236 (PMNLLNLFINKENVDLMSNEKLLQ), 271 to 296 (IKPLKEMNVTVDKLQIKDFPLTNHPE), 306 to 333 (YNVLVSNINFNTNRFRNEMPGYTLIFEE), 571 to 596 (NADIDTLMLDLSELPTMVMLSELVHN), 835 to 857 (VVSLMSIFLAVSGIHTLNQIFGH), 1944 to 1967 (FDSLNLLKNTKKTLKQFEHRFFIF), 2101 to 2125 (FFMLKTLEFDANTTSNTYMQDIFLK), and 2303 to 2327 (IGKLDLSNIHNERMHQLLRLYILRK).

It localises to the cell membrane. The protein resides in the endoplasmic reticulum membrane. It is found in the mitochondrion membrane. Functionally, tube-forming lipid transport protein which binds to phosphatidylinositols and affects phosphatidylinositol-4,5-bisphosphate (PtdIns-4,5-P2) distribution. In Saccharomyces cerevisiae (strain ATCC 204508 / S288c) (Baker's yeast), this protein is Protein FMP27, mitochondrial.